Reading from the N-terminus, the 305-residue chain is UDP-3-O-acyl-N-acetylglucosamine deacetylase (305 aa).

Zn(2+) is bound by residues H78, H237, and D241. The Proton donor role is filled by H264.

Belongs to the LpxC family. The cofactor is Zn(2+).

It catalyses the reaction a UDP-3-O-[(3R)-3-hydroxyacyl]-N-acetyl-alpha-D-glucosamine + H2O = a UDP-3-O-[(3R)-3-hydroxyacyl]-alpha-D-glucosamine + acetate. It participates in glycolipid biosynthesis; lipid IV(A) biosynthesis; lipid IV(A) from (3R)-3-hydroxytetradecanoyl-[acyl-carrier-protein] and UDP-N-acetyl-alpha-D-glucosamine: step 2/6. Catalyzes the hydrolysis of UDP-3-O-myristoyl-N-acetylglucosamine to form UDP-3-O-myristoylglucosamine and acetate, the committed step in lipid A biosynthesis. The chain is UDP-3-O-acyl-N-acetylglucosamine deacetylase from Burkholderia multivorans (strain ATCC 17616 / 249).